A 163-amino-acid polypeptide reads, in one-letter code: Nucleotide-binding protein NT01EI_1072 (163 aa).

This sequence belongs to the YajQ family.

Its function is as follows. Nucleotide-binding protein. This chain is Nucleotide-binding protein NT01EI_1072, found in Edwardsiella ictaluri (strain 93-146).